The following is a 217-amino-acid chain: Zinc finger CCHC-type and RNA-binding motif-containing protein 1 (217 aa).

The 79-residue stretch at 10–88 (STVYVSNLPF…RVIKASIAID (79 aa)) folds into the RRM domain. The CCHC-type zinc-finger motif lies at 105–122 (SKCYECGESGHLSYACPK). Residues 120–217 (CPKNMLGERE…YFSDEEELSD (98 aa)) are disordered. Residues 145–163 (PEEEIEEVEVSEEEGEDPA) show a composition bias toward acidic residues. Phosphoserine occurs at positions 155, 210, and 216.

Component of the U11/U12 snRNPs that are part of the U12-type spliceosome. Interacts with ZRSR1. In terms of tissue distribution, expressed at higher level in heart and testis, and at lower level in cerebellum. Weakly expressed at low level in liver.

It is found in the nucleus. The protein localises to the nucleoplasm. In Mus musculus (Mouse), this protein is Zinc finger CCHC-type and RNA-binding motif-containing protein 1 (Zcrb1).